A 76-amino-acid polypeptide reads, in one-letter code: Small ribosomal subunit protein bS18 (76 aa).

The protein belongs to the bacterial ribosomal protein bS18 family. In terms of assembly, part of the 30S ribosomal subunit. Forms a tight heterodimer with protein bS6.

Its function is as follows. Binds as a heterodimer with protein bS6 to the central domain of the 16S rRNA, where it helps stabilize the platform of the 30S subunit. The protein is Small ribosomal subunit protein bS18 of Tolumonas auensis (strain DSM 9187 / NBRC 110442 / TA 4).